The following is a 400-amino-acid chain: Argininosuccinate synthase (400 aa).

ATP-binding positions include 10–18 (AYSGGVDTS) and alanine 38. L-citrulline is bound at residue tyrosine 89. Glycine 119 provides a ligand contact to ATP. Positions 121, 125, and 126 each coordinate L-aspartate. Asparagine 125 lines the L-citrulline pocket. Residues arginine 129, serine 177, serine 186, glutamate 262, and tyrosine 274 each coordinate L-citrulline.

This sequence belongs to the argininosuccinate synthase family. Type 1 subfamily. As to quaternary structure, homotetramer.

The protein localises to the cytoplasm. It catalyses the reaction L-citrulline + L-aspartate + ATP = 2-(N(omega)-L-arginino)succinate + AMP + diphosphate + H(+). The protein operates within amino-acid biosynthesis; L-arginine biosynthesis; L-arginine from L-ornithine and carbamoyl phosphate: step 2/3. The sequence is that of Argininosuccinate synthase from Prochlorococcus marinus (strain NATL1A).